The primary structure comprises 184 residues: Cytidylate kinase (184 aa).

ATP is bound at residue Gly8–Thr16.

It belongs to the cytidylate kinase family. Type 2 subfamily.

Its subcellular location is the cytoplasm. It carries out the reaction CMP + ATP = CDP + ADP. It catalyses the reaction dCMP + ATP = dCDP + ADP. The polypeptide is Cytidylate kinase (Pyrobaculum arsenaticum (strain DSM 13514 / JCM 11321 / PZ6)).